A 382-amino-acid polypeptide reads, in one-letter code: Ferredoxin--NADP reductase, root isozyme 2, chloroplastic (382 aa).

Residues 1-64 (MSHSAVSQAG…DGKRYPSTTI (64 aa)) constitute a chloroplast transit peptide. The region spanning 97-225 (KESYTAKIVS…TGPSGKVMLL (129 aa)) is the FAD-binding FR-type domain. A disulfide bridge connects residues cysteine 200 and cysteine 205. Serine 201 bears the Phosphoserine mark. Threonine 233 bears the Phosphothreonine mark. An NADP(+)-binding site is contributed by 235-253 (IMIATGTGVAPYRGYLRRM).

The protein belongs to the ferredoxin--NADP reductase type 1 family. Requires FAD as cofactor. As to expression, expressed in shoots and roots. More abundant in roots than RFNR1.

Its subcellular location is the plastid. It localises to the chloroplast. The catalysed reaction is 2 reduced [2Fe-2S]-[ferredoxin] + NADP(+) + H(+) = 2 oxidized [2Fe-2S]-[ferredoxin] + NADPH. Functionally, maintains the supply of reduced ferredoxin under non-photosynthetic conditions. In Arabidopsis thaliana (Mouse-ear cress), this protein is Ferredoxin--NADP reductase, root isozyme 2, chloroplastic (RFNR2).